The chain runs to 606 residues: MCGIIGIVGKEPVADRLIESLKRLEYRGYDSAGVAGVVGGKVERRRAQGKIKALEAVLADEPLTATTGIGHTRWATHGAPNVRNAHPHTAGRVTLVHNGIIENFAELKAELAGMGRTFESDTDTEVIAQLIDVALAKGLAPLDAFKATLDRLTGAYALAVLIQGEADLLLGARRGSPLVVGEGQGEMFLGSDALAVGPFTNRVIYLEEGDYVALDHDSRRIFDASGARVERPVRVVPTSSVMLEKGNYRHFMEKEIHDQPEGCQRTIAAYVDTLTSKAAVPGDIDFATLDRIQIVACGTSYIAGVIGKYLIEQLADLPVDVEIASEFRYRTPALRPGSLVVAMSQSGETADTLAALRYCKAKGMKSAVVVNAQESTMAREVDVVWPIHCGPEIGVASTKAFTAQVSVMIALAIAAAKARGTIDAAEEQRLVKVLLEAPRLIAEAIGLEDAIKEIAADVAKARDVLYLGRGPMSALALEGALKLKEISYIHAEGYAAGELKHGPIALVDDQTPIVILAPYDSYFEKSASNMSEVMARGGQVIFITDTEGVKHAPAGAKVVVTAPASDPLVSTLVMSAPIQLLAYHVAVVKGADVDQPRNLAKSVTVE.

C2 functions as the Nucleophile; for GATase activity in the catalytic mechanism. Residues 2–217 (CGIIGIVGKE…EGDYVALDHD (216 aa)) form the Glutamine amidotransferase type-2 domain. SIS domains follow at residues 280 to 421 (VPGD…ARGT) and 454 to 596 (IAAD…VDQP). K601 acts as the For Fru-6P isomerization activity in catalysis.

As to quaternary structure, homodimer.

Its subcellular location is the cytoplasm. The enzyme catalyses D-fructose 6-phosphate + L-glutamine = D-glucosamine 6-phosphate + L-glutamate. Its function is as follows. Catalyzes the first step in hexosamine metabolism, converting fructose-6P into glucosamine-6P using glutamine as a nitrogen source. The protein is Glutamine--fructose-6-phosphate aminotransferase [isomerizing] of Caulobacter vibrioides (strain ATCC 19089 / CIP 103742 / CB 15) (Caulobacter crescentus).